A 341-amino-acid chain; its full sequence is Fe-S cluster assembly protein DRE2 (341 aa).

Positions 1 to 157 (MNTLLLLHPT…FKKLSSPPTL (157 aa)) are N-terminal SAM-like domain. The segment at 151 to 171 (LSSPPTLTDSSEADEDEESQL) is disordered. The tract at residues 157–204 (LTDSSEADEDEESQLNEKLKGSKLIYFDESSDDEIIDEDELLRDDDGA) is linker. The segment covering 161-170 (SEADEDEESQ) has biased composition (acidic residues). Positions 215, 227, 230, and 232 each coordinate [2Fe-2S] cluster. The interval 215–232 (CALPNGKRRKKACKDCTC) is fe-S binding site A. [4Fe-4S] cluster-binding residues include cysteine 304, cysteine 307, cysteine 315, and cysteine 318. 2 short sequence motifs (cx2C motif) span residues 304 to 307 (CGSC) and 315 to 318 (CDGC). The tract at residues 304 to 318 (CGSCALGDAFRCDGC) is fe-S binding site B.

It belongs to the anamorsin family. Monomer. Interacts with TAH18. Interacts with MIA40. The cofactor is [2Fe-2S] cluster. [4Fe-4S] cluster is required as a cofactor.

Its subcellular location is the cytoplasm. It localises to the mitochondrion intermembrane space. Functionally, component of the cytosolic iron-sulfur (Fe-S) protein assembly (CIA) machinery required for the maturation of extramitochondrial Fe-S proteins. Part of an electron transfer chain functioning in an early step of cytosolic Fe-S biogenesis, facilitating the de novo assembly of a [4Fe-4S] cluster on the scaffold complex CFD1-NBP35. Electrons are transferred to DRE2 from NADPH via the FAD- and FMN-containing protein TAH18. TAH18-DRE2 are also required for the assembly of the diferric tyrosyl radical cofactor of ribonucleotide reductase (RNR), probably by providing electrons for reduction during radical cofactor maturation in the catalytic small subunit RNR2. The protein is Fe-S cluster assembly protein DRE2 of Komagataella phaffii (strain GS115 / ATCC 20864) (Yeast).